Consider the following 252-residue polypeptide: 2-succinyl-6-hydroxy-2,4-cyclohexadiene-1-carboxylate synthase (252 aa).

It belongs to the AB hydrolase superfamily. MenH family. As to quaternary structure, monomer.

It catalyses the reaction 5-enolpyruvoyl-6-hydroxy-2-succinyl-cyclohex-3-ene-1-carboxylate = (1R,6R)-6-hydroxy-2-succinyl-cyclohexa-2,4-diene-1-carboxylate + pyruvate. The protein operates within quinol/quinone metabolism; 1,4-dihydroxy-2-naphthoate biosynthesis; 1,4-dihydroxy-2-naphthoate from chorismate: step 3/7. It participates in quinol/quinone metabolism; menaquinone biosynthesis. Its function is as follows. Catalyzes a proton abstraction reaction that results in 2,5-elimination of pyruvate from 2-succinyl-5-enolpyruvyl-6-hydroxy-3-cyclohexene-1-carboxylate (SEPHCHC) and the formation of 2-succinyl-6-hydroxy-2,4-cyclohexadiene-1-carboxylate (SHCHC). In Escherichia coli O81 (strain ED1a), this protein is 2-succinyl-6-hydroxy-2,4-cyclohexadiene-1-carboxylate synthase.